Reading from the N-terminus, the 360-residue chain is DNA replication and repair protein RecF (360 aa).

30–37 (GHNGSGKT) lines the ATP pocket.

This sequence belongs to the RecF family.

The protein resides in the cytoplasm. Functionally, the RecF protein is involved in DNA metabolism; it is required for DNA replication and normal SOS inducibility. RecF binds preferentially to single-stranded, linear DNA. It also seems to bind ATP. The protein is DNA replication and repair protein RecF of Shewanella amazonensis (strain ATCC BAA-1098 / SB2B).